Here is a 532-residue protein sequence, read N- to C-terminus: Exodeoxyribonuclease 7 large subunit (532 aa).

The tract at residues 497-532 is disordered; it reads AITTGEGTPAPETAAAPKKKPAKPASSDPGNQGNLF. Over residues 499 to 512 the composition is skewed to low complexity; it reads TTGEGTPAPETAAA.

It belongs to the XseA family. As to quaternary structure, heterooligomer composed of large and small subunits.

The protein localises to the cytoplasm. It carries out the reaction Exonucleolytic cleavage in either 5'- to 3'- or 3'- to 5'-direction to yield nucleoside 5'-phosphates.. Bidirectionally degrades single-stranded DNA into large acid-insoluble oligonucleotides, which are then degraded further into small acid-soluble oligonucleotides. In Agrobacterium fabrum (strain C58 / ATCC 33970) (Agrobacterium tumefaciens (strain C58)), this protein is Exodeoxyribonuclease 7 large subunit.